We begin with the raw amino-acid sequence, 740 residues long: Polyribonucleotide nucleotidyltransferase (740 aa).

D496 and D502 together coordinate Mg(2+). The 60-residue stretch at 563-622 folds into the KH domain; that stretch reads PAIIRTSIHPDKIRDIIGPGGKIIKKLVEETGADIDIEDDGRVFIAAVDREKGKRALEII. The 75-residue stretch at 632–706 folds into the S1 motif domain; the sequence is GKLYNGKVTR…QQGRLKLSKK (75 aa). Positions 707-740 are disordered; it reads EAMRDMGLAPAESTSEQPEKRERRPFSRPKATKE. Positions 723–740 are enriched in basic and acidic residues; sequence QPEKRERRPFSRPKATKE.

The protein belongs to the polyribonucleotide nucleotidyltransferase family. Requires Mg(2+) as cofactor.

It localises to the cytoplasm. The enzyme catalyses RNA(n+1) + phosphate = RNA(n) + a ribonucleoside 5'-diphosphate. In terms of biological role, involved in mRNA degradation. Catalyzes the phosphorolysis of single-stranded polyribonucleotides processively in the 3'- to 5'-direction. This Desulforamulus reducens (strain ATCC BAA-1160 / DSM 100696 / MI-1) (Desulfotomaculum reducens) protein is Polyribonucleotide nucleotidyltransferase.